The primary structure comprises 463 residues: Elongation factor 1-alpha (463 aa).

The region spanning 8–245 (KTHLNIVIIG…DALVPPVRPA (238 aa)) is the tr-type G domain. A G1 region spans residues 17-24 (GHVDSGKS). Position 17 to 24 (17 to 24 (GHVDSGKS)) interacts with GTP. A G2 region spans residues 73 to 77 (GITID). The tract at residues 94-97 (DAPG) is G3. GTP-binding positions include 94–98 (DAPGH) and 156–159 (NKMD). A G4 region spans residues 156–159 (NKMD). The interval 197–199 (SGW) is G5.

Belongs to the TRAFAC class translation factor GTPase superfamily. Classic translation factor GTPase family. EF-Tu/EF-1A subfamily. As to quaternary structure, the 42S RNP particle comprises four subunits each of which contains one molecule of 5S RNA, three molecules of tRNA, two molecules of EF1-alpha and one molecule of the 5S RNA binding protein 43.

It localises to the cytoplasm. In terms of biological role, this protein is one of two protein components of a 42S RNP particle that is very abundant in previtellogenic oocytes. A major function served by 42sp50 appears to be the storage of tRNAs for later use in oogenesis and early embryogenesis. Purified 42S particles can directly transfer aminoacyl tRNA to ribosomes. The chain is Elongation factor 1-alpha from Xenopus laevis (African clawed frog).